Here is a 220-residue protein sequence, read N- to C-terminus: MPEPIAFDESQVDISSIDFSDLEAKYHVPEPEHSYEHFVICDGAPIAPEAKAPVLKKVLTKLFSQCGKVVDMFMPLENGQTKGFLIIELDSAAAADKAVKQLNGKKLDVKHRLAVNKLPDMEKYALNDNISEEFREPAIPEFRSHGYLKSWLLDPNGREQFMLHHHDTVGVYWYKKNIQPEEVIEPRAHWTSASMKFSPKGTYLFSFFPGGVQAWGGERI.

Residues 1–94 (MPEPIAFDES…LIIELDSAAA (94 aa)) are sufficient for interaction with HCR1 and TIF32. The sufficient for interaction with PIC8 stretch occupies residues 1-220 (MPEPIAFDES…GVQAWGGERI (220 aa)). One can recognise an RRM domain in the interval 37–120 (HFVICDGAPI…HRLAVNKLPD (84 aa)).

The protein belongs to the eIF-3 subunit B family. In terms of assembly, component of the eukaryotic translation initiation factor 3 (eIF-3) complex.

The protein localises to the cytoplasm. Its function is as follows. RNA-binding component of the eukaryotic translation initiation factor 3 (eIF-3) complex, which is involved in protein synthesis of a specialized repertoire of mRNAs and, together with other initiation factors, stimulates binding of mRNA and methionyl-tRNAi to the 40S ribosome. The eIF-3 complex specifically targets and initiates translation of a subset of mRNAs involved in cell proliferation. In Pichia angusta (Yeast), this protein is Eukaryotic translation initiation factor 3 subunit B (TIF32).